The primary structure comprises 397 residues: MIIKPRVRGFICVTTHPAGCAASVREQIAYVARRGPIERGPKKVLVIGASTGYGLAARIAAAFGAGAATLGVFFERAPADAKPGTAGWYNSAAFHDEAAARGLQATSVNGDAFSDEIKHKTIDAIRRDLGQVDLVVYSVAAPRRTHPKTGVTHQSTLKPIGHAVRLRGIDTDNEAIKETLLQPATPDEIADTVAVMGGEDWRMWIDALDAAGVLADGAKTTAFTYLGEQVTHDIYWNGSIGEAKKDLDRTVLALRGKLAARGGDARVSVLKAVVTQASSAIPMMPLYLSLLFKVMKARGTHEGCIEQVDGLLRDSLYGAQPHVDAEGRLRADRLELDPAVQARVLELWDQVTDDNLYPLTDFAGYKAEFLRLFGFGIDGVDYDAPVEPNVRIPNLIE.

NAD(+) is bound by residues 48 to 53 (GASTGY), 74 to 75 (FE), 111 to 112 (DA), and 139 to 140 (VA). Residue Y225 coordinates substrate. Catalysis depends on Y235, which acts as the Proton donor. NAD(+) contacts are provided by residues K244 and 273–275 (VVT).

This sequence belongs to the TER reductase family. In terms of assembly, monomer.

It carries out the reaction a 2,3-saturated acyl-[ACP] + NAD(+) = a (2E)-enoyl-[ACP] + NADH + H(+). It functions in the pathway lipid metabolism; fatty acid biosynthesis. In terms of biological role, involved in the final reduction of the elongation cycle of fatty acid synthesis (FAS II). Catalyzes the reduction of a carbon-carbon double bond in an enoyl moiety that is covalently linked to an acyl carrier protein (ACP). The sequence is that of Enoyl-[acyl-carrier-protein] reductase [NADH] from Burkholderia pseudomallei (strain 1106a).